We begin with the raw amino-acid sequence, 93 residues long: Integration host factor subunit beta (93 aa).

This sequence belongs to the bacterial histone-like protein family. In terms of assembly, heterodimer of an alpha and a beta chain.

This protein is one of the two subunits of integration host factor, a specific DNA-binding protein that functions in genetic recombination as well as in transcriptional and translational control. This Rhodospirillum centenum (strain ATCC 51521 / SW) protein is Integration host factor subunit beta.